We begin with the raw amino-acid sequence, 861 residues long: MEGQKSNASWESSIIEGQLSKNLARYTLLLDKLSTLSQIDKLSEVIANDYAKQSKQLNAFVQQSQSSLNKESRKLELQRTNLTTTLTQFHETVATISSSNARAKAIHDDIETVDQERALVNKTLQFVKDVRTLKNNISLAHSALETKDYLVAATAINEIRSLPDKKLIVSEFAKKVVPSSEIPEEPAILIKNWCKELTSLFQEQFMEATRTQDIKELTLMFKMFPMIGQDVLGLDLYSKYVCDIIADESRKIMSNSMENSTKFQGFFSQVLLHLFKIVSTIINDHSKVIATCYGKKHMVHVMEKVEKEADLQASLILDIFMETRKIERTIHDINEWEHSQKNEDVNIDSNQSDIETDGETEKSSIISIHDLALLIMEFSQILQNWSMYSRFYSVKWNEFSDLHPHVLQPPPPIADGKFALKLKQDKVFDEFQVFVLNHLQRSFRNSISLEELPSLNDLITAVPLNDHDNISYPVTSVLDDLILLVRKNLISVVNTGQFKLLASFLNELVKFFQNRFLVKFMQNKFKLLQSKLASNVSLKRYIPKGEEQSATSRSVSPPANKFSPLSRFTFRGAAASALTNIQSNLQAVVAEDEDSILALHHYLIYLNTLYLSKVYVHRLLSIEILEDDSQRILRDNFPFDNDAAQLQNLIINSEKLVLEQTDKLSKWAVKYLFQNILQNRVRNLLGTVFVNSASSNSSTSNQKNVSRDYSAGSNQKNYITSIEDFEDLSQINSFNSKWNQLIIPYKNILHNEAYAELLSVIVDYIVTTLEQRIWTLEFNELGVTKLDRELSLFIGNMCGLNYNLREKFLKLTQIVLLLGLDDDNFDLTTGDIKDDFNGTFDWVINSQERIKARNMKIDRTQ.

It belongs to the COG4 family. In terms of assembly, component of the conserved oligomeric Golgi (COG or Sec34/Sec35) complex which consists of eight different proteins COG1-COG8.

Its subcellular location is the golgi apparatus membrane. Acts as essential component of the peripheral membrane COG complex that is involved in intra-Golgi protein trafficking. COG is located at the cis-Golgi, and regulates tethering of retrograde intra-Golgi vesicles and possibly a number of other membrane trafficking events. Possesses ATPase activity. This is Conserved oligomeric Golgi complex subunit 4 (COG4) from Saccharomyces cerevisiae (strain ATCC 204508 / S288c) (Baker's yeast).